Consider the following 274-residue polypeptide: Shikimate dehydrogenase (NADP(+)) (274 aa).

Residues Ser-20–Ser-22 and Thr-68 contribute to the shikimate site. The active-site Proton acceptor is the Lys-72. NADP(+) is bound at residue Asp-84. Positions 93 and 109 each coordinate shikimate. Residues Gly-131–Ala-135 and Leu-217 each bind NADP(+). Tyr-219 is a shikimate binding site. Gly-240 provides a ligand contact to NADP(+).

This sequence belongs to the shikimate dehydrogenase family. In terms of assembly, homodimer.

The enzyme catalyses shikimate + NADP(+) = 3-dehydroshikimate + NADPH + H(+). It participates in metabolic intermediate biosynthesis; chorismate biosynthesis; chorismate from D-erythrose 4-phosphate and phosphoenolpyruvate: step 4/7. Functionally, involved in the biosynthesis of the chorismate, which leads to the biosynthesis of aromatic amino acids. Catalyzes the reversible NADPH linked reduction of 3-dehydroshikimate (DHSA) to yield shikimate (SA). This chain is Shikimate dehydrogenase (NADP(+)), found in Sphingopyxis alaskensis (strain DSM 13593 / LMG 18877 / RB2256) (Sphingomonas alaskensis).